The chain runs to 466 residues: Cysteine--tRNA ligase (466 aa).

C27 is a binding site for Zn(2+). The 'HIGH' region signature appears at P29–H39. Residues C208, H238, and E242 each coordinate Zn(2+). The 'KMSKS' region motif lies at K270–S274. K273 contacts ATP.

It belongs to the class-I aminoacyl-tRNA synthetase family. Monomer. Zn(2+) is required as a cofactor.

The protein localises to the cytoplasm. It carries out the reaction tRNA(Cys) + L-cysteine + ATP = L-cysteinyl-tRNA(Cys) + AMP + diphosphate. This Sulfurimonas denitrificans (strain ATCC 33889 / DSM 1251) (Thiomicrospira denitrificans (strain ATCC 33889 / DSM 1251)) protein is Cysteine--tRNA ligase.